A 581-amino-acid chain; its full sequence is Leucine-rich repeat-containing protein 15 (581 aa).

A signal peptide spans 1-21; sequence MPLKHYLLLLVGCQAWGAGLA. The region spanning 22–53 is the LRRNT domain; it reads YHGCPSECTCSRASQVECTGARIVAVPTPLPW. At 22 to 538 the chain is on the extracellular side; sequence YHGCPSECTC…VWGMTQAQSG (517 aa). 15 LRR repeats span residues 54–75, 78–99, 102–123, 126–147, 150–171, 174–195, 198–219, 222–243, 246–267, 270–291, 294–315, 318–339, 342–363, 366–387, and 390–411; these read NAMS…PFLN, ALIA…AFRN, SLRY…LFQG, SLES…HFSQ, NLKE…AFDH, GLTK…VFQH, NLQV…TFDG, NLQE…LFHN, NLQR…VFMQ, QLNR…IFGP, NLRE…VFSN, QLQV…AFNG, ELRE…VFRM, NLQN…IFAN, and GLMA…IFDH. Asparagine 75 carries N-linked (GlcNAc...) asparagine glycosylation. The N-linked (GlcNAc...) asparagine glycan is linked to asparagine 369. Residues 423–475 form the LRRCT domain; it reads NPWRCDSDILPLRNWLLLNQPRLGTDTVPVCFSPANVRGQSLIIINVNVAVPS. A disordered region spans residues 489–509; it reads WYPDTPSYPDTTSVSSTTELT. Residues 499 to 509 show a composition bias toward low complexity; that stretch reads TTSVSSTTELT. A helical membrane pass occupies residues 539 to 559; it reads LAIAAIVIGIVALACSLAACV. Residues 560–581 are Cytoplasmic-facing; that stretch reads GCCCCKKRSQAVLMQMKAPNEC.

In terms of assembly, (Microbial infection) Interacts with human coronavirus SARS-CoV-2 spike protein (via RBD domain); the interaction is direct and sequesters virions at the cell surface. (Microbial infection) Interacts with human coronavirus SARS-CoV-2 spike protein (via RBD domain); the interaction is direct. As to expression, expressed in brain and placenta. Expressed in lung fibroblasts. Expressed in chodrocytes.

The protein localises to the cell membrane. Functionally, (Microbial infection) Modulates the ability of SARS-CoV-2 to infect host cells through interaction with the spike protein. Does not act as a SARS-CoV-2 entry receptor but sequesters virions and antagonizes in trans SARS-CoV-2 infection of ACE2(+) cells when expressed on nearby cells. The chain is Leucine-rich repeat-containing protein 15 (LRRC15) from Homo sapiens (Human).